Here is a 215-residue protein sequence, read N- to C-terminus: ATP-dependent Clp protease proteolytic subunit 1 (215 aa).

The active-site Nucleophile is the Ser-108. His-133 is an active-site residue.

The protein belongs to the peptidase S14 family. In terms of assembly, fourteen ClpP subunits assemble into 2 heptameric rings which stack back to back to give a disk-like structure with a central cavity, resembling the structure of eukaryotic proteasomes.

Its subcellular location is the cytoplasm. It carries out the reaction Hydrolysis of proteins to small peptides in the presence of ATP and magnesium. alpha-casein is the usual test substrate. In the absence of ATP, only oligopeptides shorter than five residues are hydrolyzed (such as succinyl-Leu-Tyr-|-NHMec, and Leu-Tyr-Leu-|-Tyr-Trp, in which cleavage of the -Tyr-|-Leu- and -Tyr-|-Trp bonds also occurs).. In terms of biological role, cleaves peptides in various proteins in a process that requires ATP hydrolysis. Has a chymotrypsin-like activity. Plays a major role in the degradation of misfolded proteins. The polypeptide is ATP-dependent Clp protease proteolytic subunit 1 (Paraburkholderia xenovorans (strain LB400)).